A 472-amino-acid chain; its full sequence is Homeobox protein PKNOX2 (472 aa).

The disordered stretch occupies residues 1 to 62 (MMQHASPAPA…STPVPSAPID (62 aa)). Polar residues predominate over residues 26–38 (DSPQMTATAQPPS). A compositionally biased stretch (low complexity) spans 46-56 (SAPSAAASTPV). One can recognise an MEIS N-terminal domain in the interval 96–179 (GSECITSASF…MHSDNLLRND (84 aa)). The segment at residues 291-350 (KRGVLPKHATNIMRSWLFQHLMHPYPTEDEKRQIAAQTNLTLLQVNNWFINARRRILQPM) is a DNA-binding region (homeobox). Disordered regions lie at residues 351 to 371 (LDASNPDPAPKAKKIKSQHRP), 386 to 405 (QQQGGAPGTNPDGSINLDNL), and 422 to 472 (MAAH…DSLE). Residues 361–371 (KAKKIKSQHRP) are compositionally biased toward basic residues. Residues 429 to 454 (LDGTEEEDEDEMEEEEEEELEEEVDE) are compositionally biased toward acidic residues.

Belongs to the TALE/MEIS homeobox family.

Its subcellular location is the nucleus. The sequence is that of Homeobox protein PKNOX2 (PKNOX2) from Homo sapiens (Human).